The chain runs to 334 residues: Holliday junction branch migration complex subunit RuvB (334 aa).

The interval 4-186 is large ATPase domain (RuvB-L); the sequence is ADRLIAPISN…FGIVQRLEYY (183 aa). Residues I25, R26, G67, K70, T71, T72, 133 to 135, R176, Y186, and R223 each bind ATP; that span reads EDY. Residue T71 participates in Mg(2+) binding. Residues 187 to 257 are small ATPAse domain (RuvB-S); the sequence is KVADLQHIVQ…TADRALNMLD (71 aa). Residues 260–334 form a head domain (RuvB-H) region; the sequence is HQGFDYMDRK…RAYLHFGIEK (75 aa). Positions 315 and 320 each coordinate DNA.

It belongs to the RuvB family. Homohexamer. Forms an RuvA(8)-RuvB(12)-Holliday junction (HJ) complex. HJ DNA is sandwiched between 2 RuvA tetramers; dsDNA enters through RuvA and exits via RuvB. An RuvB hexamer assembles on each DNA strand where it exits the tetramer. Each RuvB hexamer is contacted by two RuvA subunits (via domain III) on 2 adjacent RuvB subunits; this complex drives branch migration. In the full resolvosome a probable DNA-RuvA(4)-RuvB(12)-RuvC(2) complex forms which resolves the HJ.

The protein resides in the cytoplasm. The enzyme catalyses ATP + H2O = ADP + phosphate + H(+). The RuvA-RuvB-RuvC complex processes Holliday junction (HJ) DNA during genetic recombination and DNA repair, while the RuvA-RuvB complex plays an important role in the rescue of blocked DNA replication forks via replication fork reversal (RFR). RuvA specifically binds to HJ cruciform DNA, conferring on it an open structure. The RuvB hexamer acts as an ATP-dependent pump, pulling dsDNA into and through the RuvAB complex. RuvB forms 2 homohexamers on either side of HJ DNA bound by 1 or 2 RuvA tetramers; 4 subunits per hexamer contact DNA at a time. Coordinated motions by a converter formed by DNA-disengaged RuvB subunits stimulates ATP hydrolysis and nucleotide exchange. Immobilization of the converter enables RuvB to convert the ATP-contained energy into a lever motion, pulling 2 nucleotides of DNA out of the RuvA tetramer per ATP hydrolyzed, thus driving DNA branch migration. The RuvB motors rotate together with the DNA substrate, which together with the progressing nucleotide cycle form the mechanistic basis for DNA recombination by continuous HJ branch migration. Branch migration allows RuvC to scan DNA until it finds its consensus sequence, where it cleaves and resolves cruciform DNA. This Vibrio cholerae serotype O1 (strain ATCC 39315 / El Tor Inaba N16961) protein is Holliday junction branch migration complex subunit RuvB.